A 330-amino-acid polypeptide reads, in one-letter code: Polygalacturonase inhibitor (330 aa).

The first 24 residues, 1–24 (MELKFSTFLSLTLLFSSVLNPALS), serve as a signal peptide directing secretion. Cystine bridges form between Cys-27–Cys-57 and Cys-58–Cys-65. LRR repeat units follow at residues 69-92 (TNRI…LVGD), 93-118 (LPYL…IAKL), 119-141 (KGLK…FLSQ), 142-166 (LKNL…LSEL), 167-192 (PNLG…QFIG), 194-215 (VPDL…FAQM), and 217-237 (FTSI…IFGL). 4 N-linked (GlcNAc...) asparagine glycosylation sites follow: Asn-106, Asn-130, Asn-144, and Asn-154. Asn-238 and Asn-254 each carry an N-linked (GlcNAc...) asparagine glycan. LRR repeat units lie at residues 239–261 (KTTQ…VEFP), 262–285 (TSLT…FTQL), and 287–309 (FQFL…KLQS). A glycan (N-linked (GlcNAc...) asparagine) is linked at Asn-291. 2 disulfides stabilise this stretch: Cys-298/Cys-320 and Cys-322/Cys-329.

This sequence belongs to the polygalacturonase-inhibiting protein family. As to quaternary structure, homodimer. In terms of processing, N-linked glycosylated. Mostly expressed in fruits, and, to a lower extent, in flowers and leaves.

It is found in the secreted. The protein resides in the extracellular space. It localises to the apoplast. Its subcellular location is the cell wall. In terms of biological role, inhibitor of fungal polygalacturonase. It is an important factor for plant resistance to phytopathogenic fungi. This Pyrus communis (Pear) protein is Polygalacturonase inhibitor (PGIP).